Reading from the N-terminus, the 397-residue chain is Acetate kinase (397 aa).

N8 provides a ligand contact to Mg(2+). K15 provides a ligand contact to ATP. Residue R89 coordinates substrate. The active-site Proton donor/acceptor is D146. ATP contacts are provided by residues 206–210, 281–283, and 328–332; these read HIGNG, DLR, and GVGEN. E381 contacts Mg(2+).

The protein belongs to the acetokinase family. As to quaternary structure, homodimer. Requires Mg(2+) as cofactor. Mn(2+) is required as a cofactor.

It localises to the cytoplasm. It carries out the reaction acetate + ATP = acetyl phosphate + ADP. Its pathway is metabolic intermediate biosynthesis; acetyl-CoA biosynthesis; acetyl-CoA from acetate: step 1/2. Its function is as follows. Catalyzes the formation of acetyl phosphate from acetate and ATP. Can also catalyze the reverse reaction. The polypeptide is Acetate kinase (Oceanobacillus iheyensis (strain DSM 14371 / CIP 107618 / JCM 11309 / KCTC 3954 / HTE831)).